Here is a 228-residue protein sequence, read N- to C-terminus: Ribosomal RNA large subunit methyltransferase E (228 aa).

5 residues coordinate S-adenosyl-L-methionine: Gly76, Trp78, Asp99, Asp115, and Asp139. The Proton acceptor role is filled by Lys179.

It belongs to the class I-like SAM-binding methyltransferase superfamily. RNA methyltransferase RlmE family.

It localises to the cytoplasm. It carries out the reaction uridine(2552) in 23S rRNA + S-adenosyl-L-methionine = 2'-O-methyluridine(2552) in 23S rRNA + S-adenosyl-L-homocysteine + H(+). Its function is as follows. Specifically methylates the uridine in position 2552 of 23S rRNA at the 2'-O position of the ribose in the fully assembled 50S ribosomal subunit. This is Ribosomal RNA large subunit methyltransferase E from Nitrobacter hamburgensis (strain DSM 10229 / NCIMB 13809 / X14).